The following is a 291-amino-acid chain: Phosphoribulokinase (291 aa).

An ATP-binding site is contributed by 12-20 (GSSGAGTTS).

Belongs to the phosphoribulokinase family. Homooctamer.

The enzyme catalyses D-ribulose 5-phosphate + ATP = D-ribulose 1,5-bisphosphate + ADP + H(+). The protein operates within carbohydrate biosynthesis; Calvin cycle. In Xanthobacter flavus, this protein is Phosphoribulokinase (cbbP).